The following is a 62-amino-acid chain: Small ribosomal subunit protein uS14 (62 aa).

Residues C25, C28, C41, and C44 each coordinate Zn(2+).

The protein belongs to the universal ribosomal protein uS14 family. Zinc-binding uS14 subfamily. As to quaternary structure, part of the 30S ribosomal subunit. Contacts proteins S3 and S10. It depends on Zn(2+) as a cofactor.

Binds 16S rRNA, required for the assembly of 30S particles and may also be responsible for determining the conformation of the 16S rRNA at the A site. This is Small ribosomal subunit protein uS14 from Sulfurihydrogenibium sp. (strain YO3AOP1).